A 63-amino-acid chain; its full sequence is Large ribosomal subunit protein bL28 (63 aa).

The protein belongs to the bacterial ribosomal protein bL28 family.

The protein is Large ribosomal subunit protein bL28 (rpmB) of Selenomonas ruminantium.